A 364-amino-acid chain; its full sequence is MSDGKDSLDLSGLGAAVPNAKELSAEDKANLVESIKNTLQGLAARHTDVLESLEPKVRKRVEVLREIQSQHDDLEAKFFEERAALEAKYQKMYEPLYSKRYEIVNGVVEVDGVTKEAADETPAEQKEEKGVPEFWLNAMKNHEILSEEIQERDEEALKYLKDIKWYRISEPKGFKLEFYFDTNPFFKNSVLTKTYHMIDEDEPILEKAIGTEIEWFPGKCLTQKVLKKKPKKGSKNTKPITKTENCESFFNFFSPPQVPDDDEEIDEDTAEQLQNQMEQDYDIGSTIRDKIIPHAVSWFTGEAAQDEDFEGIMDDEDDDDEDDDDDEDEDDEDDDEDDEDEKKGGRVPSGEGQQGERPAECKQQ.

Residues 32–86 (VESIKNTLQGLAARHTDVLESLEPKVRKRVEVLREIQSQHDDLEAKFFEERAALE) adopt a coiled-coil conformation. The Nuclear export signal motif lies at 53–68 (LEPKVRKRVEVLREIQ). Residues 227-232 (KKKPKK) carry the Nuclear localization signal motif. 2 disordered regions span residues 250 to 269 (FNFF…DEDT) and 301 to 364 (GEAA…CKQQ). Acidic residues-rich tracts occupy residues 259 to 269 (PDDDEEIDEDT) and 304 to 340 (AQDE…DDED). Residue C361 is modified to Cysteine methyl ester. The S-farnesyl cysteine moiety is linked to residue C361. Residues 362–364 (KQQ) constitute a propeptide, removed in mature form.

The protein belongs to the nucleosome assembly protein (NAP) family. In terms of assembly, binds preferentially histone H1 in vitro. Highly expressed in tissues exhibiting active cell-division activities, such as root and shoot meristems and young flowers.

Its subcellular location is the nucleus. It is found in the cytoplasm. Functionally, may modulate chromatin structure by regulation of nucleosome assembly/disassembly. This is Nucleosome assembly protein 1;2 (NAP1;2) from Oryza sativa subsp. indica (Rice).